Here is a 572-residue protein sequence, read N- to C-terminus: Proline--tRNA ligase (572 aa).

The protein belongs to the class-II aminoacyl-tRNA synthetase family. ProS type 1 subfamily. Homodimer. May form a tertiary complex with YbaK and t-RNA(Pro).

The protein resides in the cytoplasm. It carries out the reaction tRNA(Pro) + L-proline + ATP = L-prolyl-tRNA(Pro) + AMP + diphosphate. Functionally, catalyzes the attachment of proline to tRNA(Pro) in a two-step reaction: proline is first activated by ATP to form Pro-AMP and then transferred to the acceptor end of tRNA(Pro). As ProRS can inadvertently accommodate and process non-cognate amino acids such as alanine and cysteine, to avoid such errors it has two additional distinct editing activities against alanine. One activity is designated as 'pretransfer' editing and involves the tRNA(Pro)-independent hydrolysis of activated Ala-AMP. The other activity is designated 'posttransfer' editing and involves deacylation of mischarged Ala-tRNA(Pro). The misacylated Cys-tRNA(Pro) is not edited by ProRS, but is probably edited in trans by YbaK. In Haemophilus influenzae (strain ATCC 51907 / DSM 11121 / KW20 / Rd), this protein is Proline--tRNA ligase.